Here is a 138-residue protein sequence, read N- to C-terminus: Large ribosomal subunit protein uL11c (138 aa).

This sequence belongs to the universal ribosomal protein uL11 family. Part of the ribosomal stalk of the 50S ribosomal subunit. Interacts with L10 and the large rRNA to form the base of the stalk. L10 forms an elongated spine to which L12 dimers bind in a sequential fashion forming a multimeric L10(L12)X complex.

It is found in the plastid. Its subcellular location is the chloroplast. Its function is as follows. Forms part of the ribosomal stalk which helps the ribosome interact with GTP-bound translation factors. This chain is Large ribosomal subunit protein uL11c, found in Cyanidioschyzon merolae (strain NIES-3377 / 10D) (Unicellular red alga).